The chain runs to 109 residues: Flagellar hook-basal body complex protein FliE (109 aa).

The interval Met-1–Gly-38 is disordered. Residues Arg-22–Gly-38 show a composition bias toward basic and acidic residues.

This sequence belongs to the FliE family.

It is found in the bacterial flagellum basal body. The polypeptide is Flagellar hook-basal body complex protein FliE (Helicobacter acinonychis (strain Sheeba)).